We begin with the raw amino-acid sequence, 67 residues long: Large ribosomal subunit protein uL29 (67 aa).

This sequence belongs to the universal ribosomal protein uL29 family.

The chain is Large ribosomal subunit protein uL29 from Exiguobacterium sp. (strain ATCC BAA-1283 / AT1b).